Reading from the N-terminus, the 240-residue chain is UDP-2,3-diacylglucosamine hydrolase (240 aa).

Asp-8, His-10, Asp-41, Asn-79, and His-114 together coordinate Mn(2+). 79–80 (NR) contacts substrate. Residues Asp-122, Ser-160, Asn-164, Lys-167, and His-195 each coordinate substrate. Positions 195 and 197 each coordinate Mn(2+).

It belongs to the LpxH family. The cofactor is Mn(2+).

The protein localises to the cell inner membrane. The enzyme catalyses UDP-2-N,3-O-bis[(3R)-3-hydroxytetradecanoyl]-alpha-D-glucosamine + H2O = 2-N,3-O-bis[(3R)-3-hydroxytetradecanoyl]-alpha-D-glucosaminyl 1-phosphate + UMP + 2 H(+). It participates in glycolipid biosynthesis; lipid IV(A) biosynthesis; lipid IV(A) from (3R)-3-hydroxytetradecanoyl-[acyl-carrier-protein] and UDP-N-acetyl-alpha-D-glucosamine: step 4/6. Functionally, hydrolyzes the pyrophosphate bond of UDP-2,3-diacylglucosamine to yield 2,3-diacylglucosamine 1-phosphate (lipid X) and UMP by catalyzing the attack of water at the alpha-P atom. Involved in the biosynthesis of lipid A, a phosphorylated glycolipid that anchors the lipopolysaccharide to the outer membrane of the cell. This chain is UDP-2,3-diacylglucosamine hydrolase, found in Escherichia fergusonii (strain ATCC 35469 / DSM 13698 / CCUG 18766 / IAM 14443 / JCM 21226 / LMG 7866 / NBRC 102419 / NCTC 12128 / CDC 0568-73).